The primary structure comprises 198 residues: Carnitine operon protein CaiE (198 aa).

Positions 174–198 (KPLTQAEENRPRLKGTTDVKPKSAQ) are disordered. Positions 180–198 (EENRPRLKGTTDVKPKSAQ) are enriched in basic and acidic residues.

It belongs to the transferase hexapeptide repeat family.

Its pathway is amine and polyamine metabolism; carnitine metabolism. Functionally, overproduction of CaiE stimulates the activity of CaiB and CaiD. In Salmonella dublin (strain CT_02021853), this protein is Carnitine operon protein CaiE.